Consider the following 154-residue polypeptide: Small ribosomal subunit protein uS11c (154 aa).

It belongs to the universal ribosomal protein uS11 family. As to quaternary structure, part of the 30S ribosomal subunit.

It is found in the plastid. The protein is Small ribosomal subunit protein uS11c of Helicosporidium sp. subsp. Simulium jonesii (Green alga).